The following is a 311-amino-acid chain: Aspartate carbamoyltransferase catalytic subunit (311 aa).

Residues Arg55 and Thr56 each contribute to the carbamoyl phosphate site. Lys83 is a binding site for L-aspartate. Carbamoyl phosphate contacts are provided by Arg105, His134, and Gln137. Positions 167 and 226 each coordinate L-aspartate. Gly267 and Pro268 together coordinate carbamoyl phosphate.

It belongs to the aspartate/ornithine carbamoyltransferase superfamily. ATCase family. As to quaternary structure, heterododecamer (2C3:3R2) of six catalytic PyrB chains organized as two trimers (C3), and six regulatory PyrI chains organized as three dimers (R2).

It catalyses the reaction carbamoyl phosphate + L-aspartate = N-carbamoyl-L-aspartate + phosphate + H(+). It participates in pyrimidine metabolism; UMP biosynthesis via de novo pathway; (S)-dihydroorotate from bicarbonate: step 2/3. Catalyzes the condensation of carbamoyl phosphate and aspartate to form carbamoyl aspartate and inorganic phosphate, the committed step in the de novo pyrimidine nucleotide biosynthesis pathway. In Corynebacterium jeikeium (strain K411), this protein is Aspartate carbamoyltransferase catalytic subunit.